The sequence spans 369 residues: MSYNSFGHLFRVTTWGESHGPAIGCVVDGVPPRIPLSEADIQPFLDRRRPGQSRFTTQRREPDIVRILSGVHGGVTTGTPVALQIENTDQRSQDYANIADRFRPGHADIAYHWKYGVRDPRGGGRSSARETATRVAAGAIARKILGERVRIRGALVQMGRHAIDRARFDWDEVDRNAFFCPDPEAAKAWAEELDAVRKAGSSLGAVVEVVAEGISPGLGAPVYAKLDADLAAAMMSINAVKGVEIGDGFAAAALRGEENADEMRMNEDGTVRFLANHAGGVLGGISTGQPVIVRFAVKPTSSILTPVHSVDSDGDEVDIQTKGRHDPCVGIRAVPVGEAMMACVLADQLLLHRAQCGETGAGRLPLAKK.

Arginine 48 and arginine 54 together coordinate NADP(+). FMN-binding positions include 125–127 (RSS), 238–239 (NA), glycine 283, 298–302 (KPTSS), and arginine 324.

It belongs to the chorismate synthase family. Homotetramer. FMNH2 serves as cofactor.

It carries out the reaction 5-O-(1-carboxyvinyl)-3-phosphoshikimate = chorismate + phosphate. The protein operates within metabolic intermediate biosynthesis; chorismate biosynthesis; chorismate from D-erythrose 4-phosphate and phosphoenolpyruvate: step 7/7. Catalyzes the anti-1,4-elimination of the C-3 phosphate and the C-6 proR hydrogen from 5-enolpyruvylshikimate-3-phosphate (EPSP) to yield chorismate, which is the branch point compound that serves as the starting substrate for the three terminal pathways of aromatic amino acid biosynthesis. This reaction introduces a second double bond into the aromatic ring system. The sequence is that of Chorismate synthase from Acidiphilium cryptum (strain JF-5).